The chain runs to 946 residues: Ent-kaur-16-ene synthase (946 aa).

6 residues coordinate Mg(2+): Asp-656, Glu-660, Asn-839, Asp-840, Ser-843, and Asp-847. The DEXXE motif signature appears at 656 to 660 (DEFFE).

This sequence belongs to the terpene synthase family. Requires Mg(2+) as cofactor.

The enzyme catalyses ent-copalyl diphosphate = ent-kaur-16-ene + diphosphate. The catalysed reaction is (2E,6E,10E)-geranylgeranyl diphosphate = ent-copalyl diphosphate. Its pathway is plant hormone biosynthesis; gibberellin biosynthesis. Its function is as follows. Catalyzes the conversion of geranylgeranyl diphosphate to the gibberellin precursor ent-kaurene diphosphate in a two step process. This Phaeosphaeria sp. (strain L487) protein is Ent-kaur-16-ene synthase.